The sequence spans 308 residues: Protein translocase subunit SecF (308 aa).

Helical transmembrane passes span 28–48 (SIILSLISFIWIGIYKFNFGI), 140–160 (IEAGAMAMLFSFLAIMVYIWV), 164–184 (WYFGLGILIALVHDVILALGF), 194–214 (LSTIAAVLTIIGYSVNDSVVI), 246–266 (ILTVITTLLANLALILFGGEA), and 272–292 (VLVFFGIIAGTYSSIFISAPI).

This sequence belongs to the SecD/SecF family. SecF subfamily. As to quaternary structure, forms a complex with SecD. Part of the essential Sec protein translocation apparatus which comprises SecA, SecYEG and auxiliary proteins SecDF-YajC and YidC.

It is found in the cell inner membrane. Its function is as follows. Part of the Sec protein translocase complex. Interacts with the SecYEG preprotein conducting channel. SecDF uses the proton motive force (PMF) to complete protein translocation after the ATP-dependent function of SecA. In Rickettsia conorii (strain ATCC VR-613 / Malish 7), this protein is Protein translocase subunit SecF.